Here is a 105-residue protein sequence, read N- to C-terminus: Mini zinc finger protein 1 (105 aa).

Positions 1 to 29 are disordered; it reads MGPQQDRSAAKPYANGSTAAAAAAGRKEN. The segment at 35 to 84 adopts a ZF-HD dimerization-type; degenerate zinc-finger fold; the sequence is YRECQRNHAASIGGHAVDGCREFMASGAEGTAAALLCAACGCHRSFHRRE.

As to quaternary structure, homo- and heterodimers.

Its subcellular location is the cytoplasm. Inhibits zinc finger homeodomain (ZHD) transcription factors, by interacting with them to prevent both their nuclear localization and their DNA-binding properties. The polypeptide is Mini zinc finger protein 1 (MIF1) (Oryza sativa subsp. indica (Rice)).